The following is a 128-amino-acid chain: Global transcriptional regulator Spx 1 (128 aa).

Cysteine 10 and cysteine 13 are disulfide-bonded.

This sequence belongs to the ArsC family. Spx subfamily. As to quaternary structure, interacts with the C-terminal domain of the alpha subunit of the RNAP.

It localises to the cytoplasm. In terms of biological role, global transcriptional regulator that plays a key role in stress response and exerts either positive or negative regulation of genes. Acts by interacting with the C-terminal domain of the alpha subunit of the RNA polymerase (RNAP). This interaction can enhance binding of RNAP to the promoter region of target genes and stimulate their transcription, or block interaction of RNAP with activator. This is Global transcriptional regulator Spx 1 from Lactococcus lactis subsp. lactis (strain IL1403) (Streptococcus lactis).